We begin with the raw amino-acid sequence, 142 residues long: uncharacterized protein (142 aa).

Positions M1 to C20 are cleaved as a signal peptide. Residue N80 is glycosylated (N-linked (GlcNAc...) asparagine).

This is an uncharacterized protein from Dictyostelium discoideum (Social amoeba).